Reading from the N-terminus, the 298-residue chain is O-glycoside alpha-1,2-mannosyltransferase homolog 6 (298 aa).

E220 (nucleophile) is an active-site residue.

The protein belongs to the glycosyltransferase 15 family.

The protein localises to the cytoplasm. It is found in the nucleus. Functionally, probable mannosyltransferase involved in O-glycosylation of cell wall and secreted proteins. The chain is O-glycoside alpha-1,2-mannosyltransferase homolog 6 (omh6) from Schizosaccharomyces pombe (strain 972 / ATCC 24843) (Fission yeast).